The sequence spans 193 residues: Oligoribonuclease (193 aa).

The Exonuclease domain occupies 20-183 (FVWLDCEMTG…ADVHESIEEL (164 aa)). Residue Tyr-141 is part of the active site.

Belongs to the oligoribonuclease family.

The protein localises to the cytoplasm. Functionally, 3'-to-5' exoribonuclease specific for small oligoribonucleotides. In Paracidovorax citrulli (strain AAC00-1) (Acidovorax citrulli), this protein is Oligoribonuclease.